A 154-amino-acid chain; its full sequence is uncharacterized protein (154 aa).

2 consecutive transmembrane segments (helical) span residues 54-74 and 81-101; these read FLIT…IYLL and FAFV…FFLS.

It localises to the cell membrane. This is an uncharacterized protein from Mycoplasma genitalium (strain ATCC 33530 / DSM 19775 / NCTC 10195 / G37) (Mycoplasmoides genitalium).